The primary structure comprises 597 residues: Elongation factor 4 (597 aa).

A tr-type G domain is found at 2–184 (KHIRNFSIIA…TIVKSIPAPE (183 aa)). Residues 14 to 19 (DHGKST) and 131 to 134 (NKID) each bind GTP.

This sequence belongs to the TRAFAC class translation factor GTPase superfamily. Classic translation factor GTPase family. LepA subfamily.

It is found in the cell inner membrane. The enzyme catalyses GTP + H2O = GDP + phosphate + H(+). Functionally, required for accurate and efficient protein synthesis under certain stress conditions. May act as a fidelity factor of the translation reaction, by catalyzing a one-codon backward translocation of tRNAs on improperly translocated ribosomes. Back-translocation proceeds from a post-translocation (POST) complex to a pre-translocation (PRE) complex, thus giving elongation factor G a second chance to translocate the tRNAs correctly. Binds to ribosomes in a GTP-dependent manner. The protein is Elongation factor 4 of Aliivibrio fischeri (strain MJ11) (Vibrio fischeri).